The primary structure comprises 309 residues: 4-hydroxy-3-methylbut-2-enyl diphosphate reductase (309 aa).

[4Fe-4S] cluster is bound at residue Cys12. (2E)-4-hydroxy-3-methylbut-2-enyl diphosphate contacts are provided by His41 and His74. Dimethylallyl diphosphate contacts are provided by His41 and His74. 2 residues coordinate isopentenyl diphosphate: His41 and His74. Residue Cys96 coordinates [4Fe-4S] cluster. His124 is a (2E)-4-hydroxy-3-methylbut-2-enyl diphosphate binding site. His124 provides a ligand contact to dimethylallyl diphosphate. Residue His124 participates in isopentenyl diphosphate binding. The active-site Proton donor is Glu126. Thr167 lines the (2E)-4-hydroxy-3-methylbut-2-enyl diphosphate pocket. Cys197 serves as a coordination point for [4Fe-4S] cluster. The (2E)-4-hydroxy-3-methylbut-2-enyl diphosphate site is built by Ser225, Ser226, Asn227, and Ser269. The dimethylallyl diphosphate site is built by Ser225, Ser226, Asn227, and Ser269. Residues Ser225, Ser226, Asn227, and Ser269 each coordinate isopentenyl diphosphate.

This sequence belongs to the IspH family. [4Fe-4S] cluster serves as cofactor.

It catalyses the reaction isopentenyl diphosphate + 2 oxidized [2Fe-2S]-[ferredoxin] + H2O = (2E)-4-hydroxy-3-methylbut-2-enyl diphosphate + 2 reduced [2Fe-2S]-[ferredoxin] + 2 H(+). The catalysed reaction is dimethylallyl diphosphate + 2 oxidized [2Fe-2S]-[ferredoxin] + H2O = (2E)-4-hydroxy-3-methylbut-2-enyl diphosphate + 2 reduced [2Fe-2S]-[ferredoxin] + 2 H(+). The protein operates within isoprenoid biosynthesis; dimethylallyl diphosphate biosynthesis; dimethylallyl diphosphate from (2E)-4-hydroxy-3-methylbutenyl diphosphate: step 1/1. It participates in isoprenoid biosynthesis; isopentenyl diphosphate biosynthesis via DXP pathway; isopentenyl diphosphate from 1-deoxy-D-xylulose 5-phosphate: step 6/6. Functionally, catalyzes the conversion of 1-hydroxy-2-methyl-2-(E)-butenyl 4-diphosphate (HMBPP) into a mixture of isopentenyl diphosphate (IPP) and dimethylallyl diphosphate (DMAPP). Acts in the terminal step of the DOXP/MEP pathway for isoprenoid precursor biosynthesis. The protein is 4-hydroxy-3-methylbut-2-enyl diphosphate reductase of Colwellia psychrerythraea (strain 34H / ATCC BAA-681) (Vibrio psychroerythus).